The chain runs to 484 residues: Acetyl-coenzyme A carboxylase carboxyl transferase subunit beta, chloroplastic (484 aa).

A CoA carboxyltransferase N-terminal domain is found at 223 to 484 (LWIQCDNCYG…LHAFFPLNKN (262 aa)). Zn(2+) contacts are provided by Cys227, Cys230, Cys243, and Cys246. A C4-type zinc finger spans residues 227 to 246 (CDNCYGLMYKKVKMNVCEQC).

It belongs to the AccD/PCCB family. In terms of assembly, acetyl-CoA carboxylase is a heterohexamer composed of biotin carboxyl carrier protein, biotin carboxylase and 2 subunits each of ACCase subunit alpha and ACCase plastid-coded subunit beta (accD). Zn(2+) serves as cofactor.

It is found in the plastid. Its subcellular location is the chloroplast stroma. It carries out the reaction N(6)-carboxybiotinyl-L-lysyl-[protein] + acetyl-CoA = N(6)-biotinyl-L-lysyl-[protein] + malonyl-CoA. It functions in the pathway lipid metabolism; malonyl-CoA biosynthesis; malonyl-CoA from acetyl-CoA: step 1/1. In terms of biological role, component of the acetyl coenzyme A carboxylase (ACC) complex. Biotin carboxylase (BC) catalyzes the carboxylation of biotin on its carrier protein (BCCP) and then the CO(2) group is transferred by the transcarboxylase to acetyl-CoA to form malonyl-CoA. This chain is Acetyl-coenzyme A carboxylase carboxyl transferase subunit beta, chloroplastic, found in Olimarabidopsis pumila (Dwarf rocket).